The following is a 304-amino-acid chain: Oxygen-dependent coproporphyrinogen-III oxidase (304 aa).

Ser93 contributes to the substrate binding site. His97 and His107 together coordinate a divalent metal cation. His107 serves as the catalytic Proton donor. 109–111 is a substrate binding site; it reads NVR. 2 residues coordinate a divalent metal cation: His146 and His176. The segment at 241–276 is important for dimerization; the sequence is YVEFNLVYDRGTLFGLQSGGRTESILMSLPPQVRWG. 259-261 contacts substrate; it reads GGR.

Belongs to the aerobic coproporphyrinogen-III oxidase family. As to quaternary structure, homodimer. A divalent metal cation serves as cofactor.

Its subcellular location is the cytoplasm. It catalyses the reaction coproporphyrinogen III + O2 + 2 H(+) = protoporphyrinogen IX + 2 CO2 + 2 H2O. Its pathway is porphyrin-containing compound metabolism; protoporphyrin-IX biosynthesis; protoporphyrinogen-IX from coproporphyrinogen-III (O2 route): step 1/1. In terms of biological role, involved in the heme biosynthesis. Catalyzes the aerobic oxidative decarboxylation of propionate groups of rings A and B of coproporphyrinogen-III to yield the vinyl groups in protoporphyrinogen-IX. The chain is Oxygen-dependent coproporphyrinogen-III oxidase from Pseudomonas syringae pv. tomato (strain ATCC BAA-871 / DC3000).